A 351-amino-acid chain; its full sequence is Divinyl chlorophyll a/b light-harvesting protein PcbC (351 aa).

Helical transmembrane passes span 27–47 (FIAAHAAHAGLMMFWAGAFTL), 64–84 (LICLPHLAGLGIGGVSNGVIT), 89–109 (CTVIAVLHLIFSGVLGAGGLL), 203–223 (VMGGHAFLAFFLIIGGAFHIA), 244–264 (VLSYSLAGVAYCAFVAAFWCA), and 306–326 (LSNVHFYLGFFFLQGHLWHAL).

The protein belongs to the PsbB/PsbC family. IsiA/Pcb subfamily. In terms of assembly, the antenna complex consists of divinyl chlorophylls (a and b) and divinyl chlorophyll a/b binding proteins and binds more divinyl chlorophyll b than does the antenna complex from high-light-adapted Prochlorococcus. Divinyl chlorophyll a serves as cofactor. The cofactor is divinyl chlorophyll b.

Its subcellular location is the cellular thylakoid membrane. The antenna complex functions as a light receptor, it captures and delivers excitation energy to photosystems II and I. The Prochlorales pcb genes are not related to higher plant LHCs. This chain is Divinyl chlorophyll a/b light-harvesting protein PcbC (pcbC), found in Prochlorococcus marinus (strain SARG / CCMP1375 / SS120).